Reading from the N-terminus, the 832-residue chain is Prickle-like protein 1-B (832 aa).

Residues 14 to 122 form the PET domain; that stretch reads FGCQRSSTSD…NIKMLSRAVM (109 aa). 3 LIM zinc-binding domains span residues 124 to 188, 189 to 249, and 250 to 313; these read AMCE…ELLK, PRCS…HYAE, and YCES…EDVH. 4 disordered regions span residues 312–346, 428–455, 602–701, and 766–832; these read VHASDSSDSAFQSARSRESRRSVRMGKSSRSADQC, QQPSEDNRSTEHWMSENIKGKNDLQRNN, ICQE…KERN, and CSSS…CIIS. 2 stretches are compositionally biased toward basic and acidic residues: residues 432–453 and 603–614; these read EDNRSTEHWMSENIKGKNDLQR and CQEKPPPEEKPM. Composition is skewed to basic residues over residues 669–680 and 816–832; these read RPHHHRRRKSRK and TKSKKKKGHKGKNCIIS. Cysteine 829 is modified (cysteine methyl ester). Cysteine 829 is lipidated: S-farnesyl cysteine. Residues 830–832 constitute a propeptide, removed in mature form; it reads IIS.

The protein belongs to the prickle / espinas / testin family. As to quaternary structure, interacts with dvl2/dsh and mapk8/jnk1. In terms of tissue distribution, expressed in the dorsal marginal zone of early gastrulae (stage 10). As gastrulation proceeds, expression expands to include the lateral and ventral marginal zones, excluding the few rows of cells above the blastopore lip. Expression moves dorsally with gastrulation cell movements, and by the end of gastrulation expression is seen in dorsal mesoderm and posterior but not anterior neural ectoderm. Expression becomes down-regulated in mesoderm but remains strong in posterior ectoderm through the neurula stages. During tailbud stages, expressed in the pronephric duct, tailbud, tailtip and forming somites. In the most posterior regions, expressed in notochord and in the floorplate of the neural tube with weak expression in the roofplate. At stage 30, expressed in a complex pattern in the head including strong expression in the lens and otic vesicle.

The protein resides in the cell membrane. Functionally, acts in a planar cell polarity (PCP) complex; polarization along the apical/basal axis of epithelial cells. Regulates the polarized assembly of fibronectrin on the surface of the mesoderm during gastrulation. Essential for gastrulation cell movements, cooperating with dvl2/dsh to activate jnk. Acts together with tes to control axial elongation. This is Prickle-like protein 1-B (prickle1-b) from Xenopus laevis (African clawed frog).